We begin with the raw amino-acid sequence, 160 residues long: GTP-dependent dephospho-CoA kinase (160 aa).

Residues D45, I46, V47, D59, K61, E108, and D130 each contribute to the GTP site.

It belongs to the GTP-dependent DPCK family.

It catalyses the reaction 3'-dephospho-CoA + GTP = GDP + CoA + H(+). The protein operates within cofactor biosynthesis; coenzyme A biosynthesis. Functionally, catalyzes the GTP-dependent phosphorylation of the 3'-hydroxyl group of dephosphocoenzyme A to form coenzyme A (CoA). The protein is GTP-dependent dephospho-CoA kinase of Staphylothermus marinus (strain ATCC 43588 / DSM 3639 / JCM 9404 / F1).